A 203-amino-acid chain; its full sequence is MLRSLVLNEKLRARVLERAEEFLLNNKADEEVWFRELVLCILTSNSSFISAYKSMNYILDKILYMDEKEISILLQESGYRFYNLKAKYLYRAKNLYGKVKKTIKEIADKDQMQAREFIATHIYGIGYKEASHFLRNVGYLDLAIIDRHILRFINNLGIPIKLKSKREYLLAESLLRSIANNLNVQVGLLDLFIFFKQTNTIVK.

Residues Lys-128 and Asp-146 contribute to the active site.

This sequence belongs to the type-2 OGG1 family.

The enzyme catalyses 2'-deoxyribonucleotide-(2'-deoxyribose 5'-phosphate)-2'-deoxyribonucleotide-DNA = a 3'-end 2'-deoxyribonucleotide-(2,3-dehydro-2,3-deoxyribose 5'-phosphate)-DNA + a 5'-end 5'-phospho-2'-deoxyribonucleoside-DNA + H(+). Catalyzes the excision of an oxidatively damaged form of guanine (7,8-dihydro-8-oxoguanine = 8-oxoG) from DNA. Also cleaves the DNA backbone at apurinic/apyrimidinic sites (AP sites). This chain is 8-oxoguanine DNA glycosylase/AP lyase, found in Sulfolobus acidocaldarius (strain ATCC 33909 / DSM 639 / JCM 8929 / NBRC 15157 / NCIMB 11770).